We begin with the raw amino-acid sequence, 199 residues long: MSGPRIGILALQGDVREHARGLTDVGAQPVEVRRAAQLAEVDGLVLPGGESTTIGRLLQVFELLEPLRAAVVAGLPVFGSCAGMILLARDVVDGRPDQPLIGGLDMVVRRNAFGRQVDSFEVDLDVDGVEGPPVHAVFIRAPWVEKAGDAVEVLARVAEAPVAVRQGSLLATAFHPELTGDSRMHRLFVDIVRSSGSGR.

49 to 51 (GES) serves as a coordination point for L-glutamine. Cys-81 acts as the Nucleophile in catalysis. Residues Arg-110 and 139 to 140 (IR) each bind L-glutamine. Active-site charge relay system residues include His-175 and Glu-177.

This sequence belongs to the glutaminase PdxT/SNO family. In the presence of PdxS, forms a dodecamer of heterodimers. Only shows activity in the heterodimer.

It catalyses the reaction aldehydo-D-ribose 5-phosphate + D-glyceraldehyde 3-phosphate + L-glutamine = pyridoxal 5'-phosphate + L-glutamate + phosphate + 3 H2O + H(+). It carries out the reaction L-glutamine + H2O = L-glutamate + NH4(+). It functions in the pathway cofactor biosynthesis; pyridoxal 5'-phosphate biosynthesis. Its function is as follows. Catalyzes the hydrolysis of glutamine to glutamate and ammonia as part of the biosynthesis of pyridoxal 5'-phosphate. The resulting ammonia molecule is channeled to the active site of PdxS. The polypeptide is Pyridoxal 5'-phosphate synthase subunit PdxT (Frankia alni (strain DSM 45986 / CECT 9034 / ACN14a)).